The sequence spans 35 residues: Tamulustoxin-2 (35 aa).

Disulfide bonds link Cys2-Cys22, Cys7-Cys31, and Cys11-Cys33.

This sequence belongs to the short scorpion toxin superfamily. Potassium channel inhibitor family. In terms of tissue distribution, expressed by the venom gland.

Its subcellular location is the secreted. In terms of biological role, blocks Kv1.6/KCNA6 potassium channels. In Hottentotta tamulus (Eastern Indian scorpion), this protein is Tamulustoxin-2.